The sequence spans 155 residues: RING finger protein 122 (155 aa).

A helical transmembrane segment spans residues 40-60 (VIFGTGIFVFMLSLIFCCYFI). The RING-type; atypical zinc-finger motif lies at 93-134 (CAVCLEDFKGKDELGVLPCQHAFHRKCLVKWLEVRCVCPMCN).

It is found in the golgi apparatus. It localises to the endoplasmic reticulum. The protein localises to the membrane. May induce necrosis and apoptosis. May play a role in cell viability. This chain is RING finger protein 122 (Rnf122), found in Mus musculus (Mouse).